A 416-amino-acid chain; its full sequence is Glutamyl-tRNA reductase (416 aa).

Residues 48–51, S104, 109–111, and Q115 each bind substrate; these read TCNR and EPQ. The active-site Nucleophile is C49. NADP(+) is bound at residue 184–189; sequence GAGEMI.

This sequence belongs to the glutamyl-tRNA reductase family. Homodimer.

The enzyme catalyses (S)-4-amino-5-oxopentanoate + tRNA(Glu) + NADP(+) = L-glutamyl-tRNA(Glu) + NADPH + H(+). Its pathway is porphyrin-containing compound metabolism; protoporphyrin-IX biosynthesis; 5-aminolevulinate from L-glutamyl-tRNA(Glu): step 1/2. In terms of biological role, catalyzes the NADPH-dependent reduction of glutamyl-tRNA(Glu) to glutamate 1-semialdehyde (GSA). In Dechloromonas aromatica (strain RCB), this protein is Glutamyl-tRNA reductase.